Here is a 571-residue protein sequence, read N- to C-terminus: Sulfite reductase [NADPH] hemoprotein beta-component (571 aa).

Residues Cys-436, Cys-442, Cys-481, and Cys-485 each contribute to the [4Fe-4S] cluster site. Cys-485 lines the siroheme pocket.

This sequence belongs to the nitrite and sulfite reductase 4Fe-4S domain family. Alpha(8)-beta(8). The alpha component is a flavoprotein, the beta component is a hemoprotein. Siroheme is required as a cofactor. Requires [4Fe-4S] cluster as cofactor.

The enzyme catalyses hydrogen sulfide + 3 NADP(+) + 3 H2O = sulfite + 3 NADPH + 4 H(+). It functions in the pathway sulfur metabolism; hydrogen sulfide biosynthesis; hydrogen sulfide from sulfite (NADPH route): step 1/1. Component of the sulfite reductase complex that catalyzes the 6-electron reduction of sulfite to sulfide. This is one of several activities required for the biosynthesis of L-cysteine from sulfate. This is Sulfite reductase [NADPH] hemoprotein beta-component from Anoxybacillus flavithermus (strain DSM 21510 / WK1).